The chain runs to 200 residues: Trem-like transcript 4 protein (200 aa).

The N-terminal stretch at 1 to 25 (MAWGGVHTCCFHLCCCCSWPQGAVP) is a signal peptide. Residues 26 to 126 (EELHKHPGQT…NIITVLRNIS (101 aa)) enclose the Ig-like V-type domain. The cysteines at positions 40 and 109 are disulfide-linked. Residue Asn-93 is glycosylated (N-linked (GlcNAc...) asparagine).

It is found in the secreted. In terms of biological role, positively regulates Toll-like receptor TLR7 signaling in macrophages. The sequence is that of Trem-like transcript 4 protein (TREML4) from Homo sapiens (Human).